The chain runs to 390 residues: Terminal nucleotidyltransferase 5C (390 aa).

It belongs to the TENT family.

Its subcellular location is the nucleus. The protein localises to the cytoplasm. The protein resides in the cytoskeleton. It is found in the microtubule organizing center. It localises to the centrosome. It carries out the reaction RNA(n) + ATP = RNA(n)-3'-adenine ribonucleotide + diphosphate. Functionally, catalyzes the transfer of one adenosine molecule from an ATP to an mRNA poly(A) tail bearing a 3'-OH terminal group and enhances mRNA stability and gene expression. The protein is Terminal nucleotidyltransferase 5C of Gallus gallus (Chicken).